A 190-amino-acid polypeptide reads, in one-letter code: Translation initiation factor IF-3 (190 aa).

A disordered region spans residues 159–190; that stretch reads QSEVQQKPKREGRNMIMFLSPRKSPLIKKDNE.

This sequence belongs to the IF-3 family. Monomer.

The protein resides in the cytoplasm. IF-3 binds to the 30S ribosomal subunit and shifts the equilibrium between 70S ribosomes and their 50S and 30S subunits in favor of the free subunits, thus enhancing the availability of 30S subunits on which protein synthesis initiation begins. This chain is Translation initiation factor IF-3, found in Prochlorococcus marinus (strain MIT 9215).